A 502-amino-acid chain; its full sequence is MKKRALISVFDKEGVLDFAKFLVSKDVEIVSTGGTYKYLKENGLNVIEINEVTDFPEMLDGRVKTLHPLVHAGILAIRDNEEHMNTLKGRNIHTIDYVVVNLYPFFEKVKEDLEFEEKVEFIDIGGPTMLRAAAKNFQDVVVISDKNDYKVVMEEIEANGETSYKTKKKLAGKVFNLMSAYDGAISNFLLADEEEEYPEYLSVSYKKMQSLRYGENSHQTAAVYASTMLDGAMNTFETLNGKELSYNNFKDVDIAWKCANEFDEPACCALKHNTPCGVAIGKDSYEAYMKAYEVDPTSIFGGIIGFNRKVDKKTAEEMVKIFLEVIAAPEYDEDALEVLKTKKNLRVLKFHNTPKADKYMVTVDGAMLVQEEDNKLVEEIKVVTEKKPTDEEMKDLLFGMKVVKYVKSNAIVVAHNGIALGIGGGQVNRIWPTEDALKRGKGATILASDAYFPFGDVAETAAKAGIKAIIQPGGSIRDQESIDVCNKYGISMVFTGYRHFKH.

An MGS-like domain is found at 1 to 144 (MKKRALISVF…KNFQDVVVIS (144 aa)).

The protein belongs to the PurH family.

The enzyme catalyses (6R)-10-formyltetrahydrofolate + 5-amino-1-(5-phospho-beta-D-ribosyl)imidazole-4-carboxamide = 5-formamido-1-(5-phospho-D-ribosyl)imidazole-4-carboxamide + (6S)-5,6,7,8-tetrahydrofolate. It carries out the reaction IMP + H2O = 5-formamido-1-(5-phospho-D-ribosyl)imidazole-4-carboxamide. Its pathway is purine metabolism; IMP biosynthesis via de novo pathway; 5-formamido-1-(5-phospho-D-ribosyl)imidazole-4-carboxamide from 5-amino-1-(5-phospho-D-ribosyl)imidazole-4-carboxamide (10-formyl THF route): step 1/1. It functions in the pathway purine metabolism; IMP biosynthesis via de novo pathway; IMP from 5-formamido-1-(5-phospho-D-ribosyl)imidazole-4-carboxamide: step 1/1. The sequence is that of Bifunctional purine biosynthesis protein PurH from Clostridium beijerinckii (strain ATCC 51743 / NCIMB 8052) (Clostridium acetobutylicum).